The primary structure comprises 340 residues: Transcription initiation factor IIB (340 aa).

A TFIIB-type zinc finger spans residues 16 to 49 (VKMICSECREDPPNLVEEFSSGDTVCGSCGLVLG). Zn(2+)-binding residues include Cys-20, Cys-23, Cys-41, and Cys-44. Tandem repeats lie at residues 128–204 (MCDA…TLQR) and 239–315 (FCNR…LLHA).

Belongs to the TFIIB family. As to quaternary structure, associates with TFIID-IIA (DA complex) to form TFIID-IIA-IIB (DAB-complex) which is then recognized by polymerase II.

It is found in the nucleus. General factor that plays a major role in the activation of eukaryotic genes transcribed by RNA polymerase II. This Schizosaccharomyces pombe (strain 972 / ATCC 24843) (Fission yeast) protein is Transcription initiation factor IIB (sua7).